The chain runs to 23 residues: EWCGTNSDCGEGECCTGGSFNRH.

In terms of tissue distribution, expressed by the venom gland.

It localises to the secreted. In Ctenus ornatus (Brazilian spider), this protein is U22-ctenitoxin-Co1a.